The following is a 300-amino-acid chain: uncharacterized protein (300 aa).

Residues 1-19 (MKLKLLLIPLLGSSLLLSA) form the signal peptide. C20 carries the N-palmitoyl cysteine lipid modification. C20 carries S-diacylglycerol cysteine lipidation.

This sequence belongs to the MG439/MG440 family.

It localises to the cell membrane. This is an uncharacterized protein from Mycoplasma pneumoniae (strain ATCC 29342 / M129 / Subtype 1) (Mycoplasmoides pneumoniae).